The following is a 173-amino-acid chain: Inorganic pyrophosphatase (173 aa).

Lysine 28, arginine 42, and tyrosine 54 together coordinate substrate. Residues aspartate 64, aspartate 69, and aspartate 101 each contribute to the Mg(2+) site. Substrate is bound at residue tyrosine 140.

This sequence belongs to the PPase family. As to quaternary structure, homohexamer. It depends on Mg(2+) as a cofactor.

The protein localises to the cytoplasm. It carries out the reaction diphosphate + H2O = 2 phosphate + H(+). Catalyzes the hydrolysis of inorganic pyrophosphate (PPi) forming two phosphate ions. The chain is Inorganic pyrophosphatase from Helicobacter pylori (strain J99 / ATCC 700824) (Campylobacter pylori J99).